The following is a 426-amino-acid chain: Lipoyl synthase, mitochondrial (426 aa).

A mitochondrion-targeting transit peptide spans 1–29 (MASPAPLQRLQAPLRRSLARAAVLSSRTY). The segment covering 27-42 (RTYATIPSPSDPGLTQ) has biased composition (polar residues). Residues 27-61 (RTYATIPSPSDPGLTQSSPSPAASTTPAKKAPRPS) are disordered. Residues 43–55 (SSPSPAASTTPAK) are compositionally biased toward low complexity. Residues cysteine 140, cysteine 145, cysteine 151, cysteine 171, cysteine 175, cysteine 178, and serine 388 each coordinate [4Fe-4S] cluster. Residues 154–377 (GNDKSAATAT…KQRALDMGFL (224 aa)) enclose the Radical SAM core domain.

The protein belongs to the radical SAM superfamily. Lipoyl synthase family. The cofactor is [4Fe-4S] cluster.

It is found in the mitochondrion. The catalysed reaction is [[Fe-S] cluster scaffold protein carrying a second [4Fe-4S](2+) cluster] + N(6)-octanoyl-L-lysyl-[protein] + 2 oxidized [2Fe-2S]-[ferredoxin] + 2 S-adenosyl-L-methionine + 4 H(+) = [[Fe-S] cluster scaffold protein] + N(6)-[(R)-dihydrolipoyl]-L-lysyl-[protein] + 4 Fe(3+) + 2 hydrogen sulfide + 2 5'-deoxyadenosine + 2 L-methionine + 2 reduced [2Fe-2S]-[ferredoxin]. It participates in protein modification; protein lipoylation via endogenous pathway; protein N(6)-(lipoyl)lysine from octanoyl-[acyl-carrier-protein]: step 2/2. In terms of biological role, catalyzes the radical-mediated insertion of two sulfur atoms into the C-6 and C-8 positions of the octanoyl moiety bound to the lipoyl domains of lipoate-dependent enzymes, thereby converting the octanoylated domains into lipoylated derivatives. This chain is Lipoyl synthase, mitochondrial, found in Podospora anserina (strain S / ATCC MYA-4624 / DSM 980 / FGSC 10383) (Pleurage anserina).